The sequence spans 261 residues: Calbindin (261 aa).

Residue alanine 2 is modified to N-acetylalanine. Residues 2-7 (AESHLQ) are interaction with RANBP9. 5 EF-hand domains span residues 11–46 (ITAS…LQQA), 53–88 (ELSP…EENF), 98–133 (KSCE…LLEK), 142–177 (KLAE…QENF), and 186–221 (MCGK…LCEK). The Ca(2+) site is built by aspartate 24, aspartate 26, serine 28, tyrosine 30, and glutamate 35. Ca(2+) is bound by residues aspartate 111, aspartate 113, glutamate 122, aspartate 155, asparagine 157, aspartate 159, lysine 161, glutamate 166, aspartate 199, aspartate 201, asparagine 203, tyrosine 205, and glutamate 210.

Belongs to the calbindin family. As to quaternary structure, interacts with RANBP9.

In terms of biological role, buffers cytosolic calcium. May stimulate a membrane Ca(2+)-ATPase and a 3',5'-cyclic nucleotide phosphodiesterase. The polypeptide is Calbindin (CALB1) (Pongo abelii (Sumatran orangutan)).